Here is a 500-residue protein sequence, read N- to C-terminus: NAD(P)H-quinone oxidoreductase chain 4, chloroplastic (500 aa).

14 helical membrane passes run 3–23 (FFPWLTIIVVLPISAGSLIFF), 37–57 (ICICLLELLLITYVFCYHFQL), 87–107 (IGPILLTGFITTLATLAAWPI), 113–130 (LFHFLMLAMYSGQIGSFS), 134–154 (LLLFFIMWELELIPVYLLLSM), 167–187 (FILYTAGGSIFLLMGVLGMGL), 208–228 (ALEIMFYFGFLIAYAVKSPII), 242–262 (HYSTCMLLAGILLKMGAYGLV), 272–292 (AHSIFSPWLMIVGTIQIIYAA), 305–325 (IAYSSVSHMGFTIIGIGSITD), 330–350 (GAVLQIISHGFIGAALFFLAG), 386–406 (LALPGMSGFVAELIVFFGIIT), 416–436 (ILITFVMAIGMILTPIYSLSM), and 462–482 (LFVSISIFLPVIGIGIYPDFV).

The protein belongs to the complex I subunit 4 family.

It is found in the plastid. It localises to the chloroplast thylakoid membrane. It carries out the reaction a plastoquinone + NADH + (n+1) H(+)(in) = a plastoquinol + NAD(+) + n H(+)(out). The enzyme catalyses a plastoquinone + NADPH + (n+1) H(+)(in) = a plastoquinol + NADP(+) + n H(+)(out). This chain is NAD(P)H-quinone oxidoreductase chain 4, chloroplastic, found in Platanus occidentalis (Sycamore).